A 369-amino-acid polypeptide reads, in one-letter code: Biglycan (369 aa).

The signal sequence occupies residues 1-16 (MWPLWPLAALLALSQA). Positions 17–37 (LPFEQKAFWDFTLDDGLPMLN) are excised as a propeptide. O-linked (Xyl...) (glycosaminoglycan) serine glycosylation is found at Ser42 and Ser48. 2 cysteine pairs are disulfide-bonded: Cys64–Cys70 and Cys68–Cys77. 12 LRR repeats span residues 83 to 103 (KAVPKEISPDTTLLDLQNNDI), 104 to 127 (SELRKDDFKGLQHLYALVLVNNKI), 128 to 151 (SKIHEKAFSPLRKLQKLYISKNHL), 152 to 172 (VEIPPNLPSSLVELRIHDNRI), 173 to 196 (RKVPKGVFSGLRNMNCIEMGGNPL), 197 to 221 (ENSGFEPGAFDGLKLNYLRISEAKL), 222 to 242 (TGIPKDLPETLNELHLDHNKI), 243 to 266 (QAIELEDLLRYSKLYRLGLGHNQI), 267 to 290 (RMIENGSLSFLPTLRELHLDNNKL), 291 to 313 (SRVPAGLPDLKLLQVVYLHTNNI), 314 to 343 (TKVGVNDFCPVGFGVKRAYYNGISLFNNPV), and 344 to 369 (PYWEVQPATFRCVTDRLAIQFGNYKK). O-linked (Xyl...) (glycosaminoglycan) serine glycosylation is found at Ser181 and Ser199. Residues Asn271 and Asn312 are each glycosylated (N-linked (GlcNAc...) asparagine). A disulfide bridge links Cys322 with Cys355.

The protein belongs to the small leucine-rich proteoglycan (SLRP) family. SLRP class I subfamily. As to quaternary structure, homodimer. Forms a ternary complex with MFAP2 and ELN. The two attached glycosaminoglycan chains can be either chondroitin sulfate or dermatan sulfate. As to expression, found in several connective tissues, especially in articular cartilages.

Its subcellular location is the secreted. The protein resides in the extracellular space. The protein localises to the extracellular matrix. Functionally, may be involved in collagen fiber assembly. The polypeptide is Biglycan (BGN) (Bos taurus (Bovine)).